The sequence spans 328 residues: Nodulation protein Z (328 aa).

The region spanning 6–317 (CPEGRSVISR…FDLARGVFCQ (312 aa)) is the GT23 domain.

The protein belongs to the glycosyltransferase 23 family.

In terms of biological role, fucosyltransferase which adds the fucose moiety of the nod factor on its terminal reducing N-acetylglucosamine end. Uses GDP-fucose as the donor group. The chain is Nodulation protein Z (nodZ) from Azorhizobium caulinodans (strain ATCC 43989 / DSM 5975 / JCM 20966 / LMG 6465 / NBRC 14845 / NCIMB 13405 / ORS 571).